The sequence spans 556 residues: Formate--tetrahydrofolate ligase (556 aa).

Residue 65-72 (TSAGEGKT) participates in ATP binding.

It belongs to the formate--tetrahydrofolate ligase family.

The catalysed reaction is (6S)-5,6,7,8-tetrahydrofolate + formate + ATP = (6R)-10-formyltetrahydrofolate + ADP + phosphate. Its pathway is one-carbon metabolism; tetrahydrofolate interconversion. The protein is Formate--tetrahydrofolate ligase of Kosmotoga olearia (strain ATCC BAA-1733 / DSM 21960 / TBF 19.5.1).